A 184-amino-acid chain; its full sequence is Ribosome-recycling factor (184 aa).

It belongs to the RRF family.

Its subcellular location is the cytoplasm. Its function is as follows. Responsible for the release of ribosomes from messenger RNA at the termination of protein biosynthesis. May increase the efficiency of translation by recycling ribosomes from one round of translation to another. This Caldicellulosiruptor saccharolyticus (strain ATCC 43494 / DSM 8903 / Tp8T 6331) protein is Ribosome-recycling factor.